The following is a 212-amino-acid chain: MKNVKIALTKGRLEKKAIEIFKTININTRELQDKGRKLIFNCENEEYNIELFLVKAKDVETYVEYGAADIGIVGKDTLMETNKEFYEVLDLNVGKCKFALAALPSFKLDQGYNRKKIATKYPNIAREYFRKKGMDVELIKIEGSVELGPIVGLADAIVDIVETGNTLRENGLVVVEDICEISARMIVNKASMKTKKDEIIKIIENVSEVIRQ.

The protein belongs to the ATP phosphoribosyltransferase family. Short subfamily. Heteromultimer composed of HisG and HisZ subunits.

The protein resides in the cytoplasm. It carries out the reaction 1-(5-phospho-beta-D-ribosyl)-ATP + diphosphate = 5-phospho-alpha-D-ribose 1-diphosphate + ATP. It participates in amino-acid biosynthesis; L-histidine biosynthesis; L-histidine from 5-phospho-alpha-D-ribose 1-diphosphate: step 1/9. Functionally, catalyzes the condensation of ATP and 5-phosphoribose 1-diphosphate to form N'-(5'-phosphoribosyl)-ATP (PR-ATP). Has a crucial role in the pathway because the rate of histidine biosynthesis seems to be controlled primarily by regulation of HisG enzymatic activity. This is ATP phosphoribosyltransferase from Clostridium botulinum (strain Langeland / NCTC 10281 / Type F).